The primary structure comprises 444 residues: Adenylosuccinate lyase (444 aa).

N(6)-(1,2-dicarboxyethyl)-AMP is bound by residues 9–10 (RY), 73–75 (KHD), and 97–98 (TS). The active-site Proton donor/acceptor is His145. A N(6)-(1,2-dicarboxyethyl)-AMP-binding site is contributed by Gln219. Ser269 functions as the Proton donor/acceptor in the catalytic mechanism. Residues Ser270, 275–277 (KRN), Asn283, and 314–318 (SAERI) contribute to the N(6)-(1,2-dicarboxyethyl)-AMP site.

It belongs to the lyase 1 family. Adenylosuccinate lyase subfamily. Homotetramer. Residues from neighboring subunits contribute catalytic and substrate-binding residues to each active site.

The enzyme catalyses N(6)-(1,2-dicarboxyethyl)-AMP = fumarate + AMP. The catalysed reaction is (2S)-2-[5-amino-1-(5-phospho-beta-D-ribosyl)imidazole-4-carboxamido]succinate = 5-amino-1-(5-phospho-beta-D-ribosyl)imidazole-4-carboxamide + fumarate. The protein operates within purine metabolism; AMP biosynthesis via de novo pathway; AMP from IMP: step 2/2. It participates in purine metabolism; IMP biosynthesis via de novo pathway; 5-amino-1-(5-phospho-D-ribosyl)imidazole-4-carboxamide from 5-amino-1-(5-phospho-D-ribosyl)imidazole-4-carboxylate: step 2/2. Catalyzes two reactions in de novo purine nucleotide biosynthesis. Catalyzes the breakdown of 5-aminoimidazole- (N-succinylocarboxamide) ribotide (SAICAR or 2-[5-amino-1-(5-phospho-beta-D-ribosyl)imidazole-4-carboxamido]succinate) to 5-aminoimidazole-4-carboxamide ribotide (AICAR or 5-amino-1-(5-phospho-beta-D-ribosyl)imidazole-4-carboxamide) and fumarate, and of adenylosuccinate (ADS or N(6)-(1,2-dicarboxyethyl)-AMP) to adenosine monophosphate (AMP) and fumarate. The polypeptide is Adenylosuccinate lyase (purB) (Archaeoglobus fulgidus (strain ATCC 49558 / DSM 4304 / JCM 9628 / NBRC 100126 / VC-16)).